Consider the following 405-residue polypeptide: CCA-adding enzyme (405 aa).

ATP is bound by residues Gly-8 and Arg-11. Positions 8 and 11 each coordinate CTP. Residues Glu-21 and Asp-23 each contribute to the Mg(2+) site. Arg-91, Arg-137, and Arg-140 together coordinate ATP. Positions 91, 137, and 140 each coordinate CTP. In terms of domain architecture, HD spans 220–326; the sequence is PLSHGLSTLS…LNFFDELDLW (107 aa).

It belongs to the tRNA nucleotidyltransferase/poly(A) polymerase family. Bacterial CCA-adding enzyme type 2 subfamily. It depends on Mg(2+) as a cofactor.

The catalysed reaction is a tRNA precursor + 2 CTP + ATP = a tRNA with a 3' CCA end + 3 diphosphate. The enzyme catalyses a tRNA with a 3' CCA end + 2 CTP + ATP = a tRNA with a 3' CCACCA end + 3 diphosphate. In terms of biological role, catalyzes the addition and repair of the essential 3'-terminal CCA sequence in tRNAs without using a nucleic acid template. Adds these three nucleotides in the order of C, C, and A to the tRNA nucleotide-73, using CTP and ATP as substrates and producing inorganic pyrophosphate. tRNA 3'-terminal CCA addition is required both for tRNA processing and repair. Also involved in tRNA surveillance by mediating tandem CCA addition to generate a CCACCA at the 3' terminus of unstable tRNAs. While stable tRNAs receive only 3'-terminal CCA, unstable tRNAs are marked with CCACCA and rapidly degraded. This chain is CCA-adding enzyme, found in Hamiltonella defensa subsp. Acyrthosiphon pisum (strain 5AT).